The chain runs to 230 residues: CRP-like protein Clp (230 aa).

18 to 139 (PSLALDAGTI…APKILYAIGV (122 aa)) serves as a coordination point for a nucleoside 3',5'-cyclic phosphate. The region spanning 158–230 (LDVTDRIVRT…GKTVVLYGTR (73 aa)) is the HTH crp-type domain. Residues 190–209 (RQELARLVGCSREMAGRVLK) constitute a DNA-binding region (H-T-H motif).

As to quaternary structure, homodimer.

It localises to the cytoplasm. Its activity is regulated as follows. Allosterically inhibited by cyclic di-GMP (c-di-GMP), which binds to Clp and abolishes its ability to bind its target gene promoter. In terms of biological role, global transcriptional regulator that regulates virulence factors production by activating or repressing the expression of a large set of genes in diffusible signal factor (DSF) pathway. This is CRP-like protein Clp (clp) from Xanthomonas axonopodis pv. citri (strain 306).